The primary structure comprises 332 residues: Solute carrier family 25 member 16 (332 aa).

Solcar repeat units lie at residues 34 to 120, 128 to 216, and 238 to 328; these read FYWL…YKTL, SGHV…LKSV, and LKTH…MKQF. A run of 6 helical transmembrane segments spans residues 37-57, 88-108, 134-154, 191-211, 244-264, and 299-319; these read LRSF…VAPL, GFLG…PYGA, LMAG…LDMV, GLMP…FTFG, LLCG…FDVT, and GLYR…AVAF.

It belongs to the mitochondrial carrier (TC 2.A.29) family.

The protein localises to the mitochondrion inner membrane. May be involved in the transport of coenzyme A in the mitochondrial matrix. Very little is known about the physiological function of this carrier. This Homo sapiens (Human) protein is Solute carrier family 25 member 16.